Here is an 864-residue protein sequence, read N- to C-terminus: DNA mismatch repair protein MutS (864 aa).

607 to 614 (GPNMGGKS) lines the ATP pocket.

It belongs to the DNA mismatch repair MutS family.

Its function is as follows. This protein is involved in the repair of mismatches in DNA. It is possible that it carries out the mismatch recognition step. This protein has a weak ATPase activity. This Neisseria meningitidis serogroup A / serotype 4A (strain DSM 15465 / Z2491) protein is DNA mismatch repair protein MutS.